We begin with the raw amino-acid sequence, 566 residues long: Unconventional myosin-VIIa (566 aa).

Positions 67-566 (MMEDMIQHLG…AGVVYYESQG (500 aa)) constitute a Myosin motor domain. 160–167 (GESGAGKT) contacts ATP.

It belongs to the TRAFAC class myosin-kinesin ATPase superfamily. Myosin family. In terms of assembly, might homodimerize in a two headed molecule through the formation of a coiled-coil rod. Identified in a complex with USH1C and USH1G. Interacts with MYRIP. Interacts with RPE65. Interacts with CIB2. May interact with CALM. Interacts with WHRN. Interacts with PLEKHB1 (via PH domain). Interacts with PCDH15. Interacts with TWF2. Interacts with USH1G. Interacts with MYH9. Interacts (via MyTH4-FERM domains) with cytoplasmic regions of ADGRV1 and USH2A. Interacts with PDZD7 (via MyTH4-FERM domains). Interacts with CALML4.

The protein localises to the cytoplasm. Its subcellular location is the cell cortex. It is found in the cytoskeleton. It localises to the synapse. Functionally, myosins are actin-based motor molecules with ATPase activity. Unconventional myosins serve in intracellular movements. Their highly divergent tails bind to membranous compartments, which are then moved relative to actin filaments. In the retina, plays an important role in the renewal of the outer photoreceptor disks. Plays an important role in the distribution and migration of retinal pigment epithelial (RPE) melanosomes and phagosomes, and in the regulation of opsin transport in retinal photoreceptors. In the inner ear, plays an important role in differentiation, morphogenesis and organization of cochlear hair cell bundles. Motor protein that is a part of the functional network formed by USH1C, USH1G, CDH23 and MYO7A that mediates mechanotransduction in cochlear hair cells. Required for normal hearing. Involved in hair-cell vesicle trafficking of aminoglycosides, which are known to induce ototoxicity. In Sus scrofa (Pig), this protein is Unconventional myosin-VIIa (MYO7A).